The primary structure comprises 134 residues: Small ribosomal subunit protein uS11 (134 aa).

Disordered regions lie at residues Met-1–Gly-24 and Ile-115–Val-134. Positions Ala-9 to Lys-18 are enriched in basic residues.

The protein belongs to the universal ribosomal protein uS11 family. As to quaternary structure, part of the 30S ribosomal subunit. Interacts with proteins S7 and S18. Binds to IF-3.

Its function is as follows. Located on the platform of the 30S subunit, it bridges several disparate RNA helices of the 16S rRNA. Forms part of the Shine-Dalgarno cleft in the 70S ribosome. In Saccharopolyspora erythraea (strain ATCC 11635 / DSM 40517 / JCM 4748 / NBRC 13426 / NCIMB 8594 / NRRL 2338), this protein is Small ribosomal subunit protein uS11.